We begin with the raw amino-acid sequence, 563 residues long: Arginine--tRNA ligase (563 aa).

The 'HIGH' region motif lies at 120–130; sequence PNIAKPFHIGH.

Belongs to the class-I aminoacyl-tRNA synthetase family. As to quaternary structure, monomer.

It localises to the cytoplasm. The catalysed reaction is tRNA(Arg) + L-arginine + ATP = L-arginyl-tRNA(Arg) + AMP + diphosphate. The polypeptide is Arginine--tRNA ligase (Clostridium botulinum (strain Okra / Type B1)).